We begin with the raw amino-acid sequence, 648 residues long: Macrolide export ATP-binding/permease protein MacB 1 (648 aa).

The 239-residue stretch at 6–244 (LQLSGIRRHF…PAPTTSRADT (239 aa)) folds into the ABC transporter domain. Position 42 to 49 (42 to 49 (GASGSGKS)) interacts with ATP. A disordered region spans residues 222–248 (VVADRRREPTPPSPAPTTSRADTGGRG). The next 4 membrane-spanning stretches (helical) occupy residues 273–293 (FLTM…VALG), 521–541 (LTLL…IGVM), 578–598 (LVCL…GVLF), and 613–633 (AVLM…FFPA).

Belongs to the ABC transporter superfamily. Macrolide exporter (TC 3.A.1.122) family. In terms of assembly, homodimer. Part of the tripartite efflux system MacAB-TolC, which is composed of an inner membrane transporter, MacB, a periplasmic membrane fusion protein, MacA, and an outer membrane component, TolC. The complex forms a large protein conduit and can translocate molecules across both the inner and outer membranes. Interacts with MacA.

It localises to the cell inner membrane. In terms of biological role, part of the tripartite efflux system MacAB-TolC. MacB is a non-canonical ABC transporter that contains transmembrane domains (TMD), which form a pore in the inner membrane, and an ATP-binding domain (NBD), which is responsible for energy generation. Confers resistance against macrolides. This is Macrolide export ATP-binding/permease protein MacB 1 from Aeromonas hydrophila subsp. hydrophila (strain ATCC 7966 / DSM 30187 / BCRC 13018 / CCUG 14551 / JCM 1027 / KCTC 2358 / NCIMB 9240 / NCTC 8049).